A 372-amino-acid polypeptide reads, in one-letter code: Peptide chain release factor 1 (372 aa).

Residue Gln237 is modified to N5-methylglutamine.

It belongs to the prokaryotic/mitochondrial release factor family. In terms of processing, methylated by PrmC. Methylation increases the termination efficiency of RF1.

The protein localises to the cytoplasm. Peptide chain release factor 1 directs the termination of translation in response to the peptide chain termination codons UAG and UAA. In Anaeromyxobacter sp. (strain Fw109-5), this protein is Peptide chain release factor 1.